An 847-amino-acid polypeptide reads, in one-letter code: MVIRSLLLLLLAAIVPVFAESGIDAWLRYARLPSSATRGHLTSFPDRIVVLNASKNGPLASASSELHKGIKGILGLDLDVSSRGGKHCSTQKSIVISTLDTYQSACGKLSPKLNLKEDGYWLSTKGGSVQIIGQNERGALYGAFQYLSYLGQGDFSGKAFASNPSAPVRWSNQWDNLNAATAAHGSIERGYGGPSIFFENGLIKEDLSRVPLYGRLLASVGLNGIVINNVNADANLLNETNLQGLKRIADLFRPWGVNVGISLNFASPQVLGDLSTFDPLDDSVIKWWTDKTDRIYQLVPDLAGYLVKANSEGQPGPLTYNRTLAEGANLFAKAVQPHGGIVVFRAFVYDQLNETDWKADRANAAVDFFKSLDGQFDDNVLVQIKYGPIDFQVREPASPLFANLPKTAVSIELEVTQEYLGQQSHLVYLPPLWQTVLGFDMRYNNRQSYVRDIISGEVFGHKLGGYAGVINVGMDDTWLGSHLAMSNMFAYGRLAWNPRADSRDIVEEWTRLTFGLDRDVVSTIADMSLKSWPAYEGYSGNLGIQTLTDILYTHYGANPASQDNNGWGQWTRADSKTIGMDRTVSNGTGNAGQYPKEVAARFEHTQTTPDDLMLWFHHVPYTFRLHSGKSVIQHFYDAHYTGAATVQRFPAAWKSLKSKIDTERYNAVLYKLQYQTGHSLVWRDAITEFYRNLSSIPDQLNRVRNHPHRIEAEDMDLSGFTVVNVSPTECASKYKAIATNGTGTATTRLNVPSGKYTVAVNYYDVINGTASYDVLLNGKSLGKWKGDSETHLGHDFSTFLDCHSAIRITFEGVRISRGDKLTIRGTGNAQEQAAIDYVSILPQGVVD.

The signal sequence occupies residues 1 to 19 (MVIRSLLLLLLAAIVPVFA). 8 N-linked (GlcNAc...) asparagine glycosylation sites follow: asparagine 52, asparagine 238, asparagine 321, asparagine 353, asparagine 586, asparagine 692, asparagine 740, and asparagine 767.

This sequence belongs to the glycosyl hydrolase 67 family.

It localises to the secreted. It carries out the reaction an alpha-D-glucuronoside + H2O = D-glucuronate + an alcohol. Releases 4-O-methylglucuronic acid from xylan. This Hypocrea jecorina (Trichoderma reesei) protein is Alpha-glucuronidase.